The following is a 53-amino-acid chain: Sec-independent protein translocase protein TatA (53 aa).

Residues 1–21 (MGMSFSHLLIVLLIIFVLFGA) form a helical membrane-spanning segment.

It belongs to the TatA/E family. As to quaternary structure, the Tat system comprises two distinct complexes: a TatABC complex, containing multiple copies of TatA, TatB and TatC subunits, and a separate TatA complex, containing only TatA subunits. Substrates initially bind to the TatABC complex, which probably triggers association of the separate TatA complex to form the active translocon.

It is found in the cell inner membrane. Part of the twin-arginine translocation (Tat) system that transports large folded proteins containing a characteristic twin-arginine motif in their signal peptide across membranes. TatA could form the protein-conducting channel of the Tat system. The chain is Sec-independent protein translocase protein TatA from Rickettsia africae (strain ESF-5).